The chain runs to 334 residues: tRNA uridine(34) hydroxylase (334 aa).

A Rhodanese domain is found at 123–217 (SDPDVILVDT…YLEEVKAEES (95 aa)). The active-site Cysteine persulfide intermediate is C177.

This sequence belongs to the TrhO family.

The catalysed reaction is uridine(34) in tRNA + AH2 + O2 = 5-hydroxyuridine(34) in tRNA + A + H2O. Catalyzes oxygen-dependent 5-hydroxyuridine (ho5U) modification at position 34 in tRNAs. This Shewanella baltica (strain OS185) protein is tRNA uridine(34) hydroxylase.